The primary structure comprises 161 residues: uncharacterized protein (161 aa).

This sequence belongs to the M.jannaschii MJ0150/MJ0739/MJ0745/MJ1460/MJ1642 family.

This is an uncharacterized protein from Methanocaldococcus jannaschii (strain ATCC 43067 / DSM 2661 / JAL-1 / JCM 10045 / NBRC 100440) (Methanococcus jannaschii).